The primary structure comprises 100 residues: uncharacterized protein (100 aa).

Positions 78 to 100 (NNGNLDFKGRADERRQPVSNLRM) are disordered. Positions 84–93 (FKGRADERRQ) are enriched in basic and acidic residues.

This is an uncharacterized protein from Saccharomyces cerevisiae (strain ATCC 204508 / S288c) (Baker's yeast).